Reading from the N-terminus, the 189-residue chain is Methylated-DNA--protein-cysteine methyltransferase (189 aa).

Tyr-128 and Arg-142 together coordinate DNA. The active-site Nucleophile; methyl group acceptor is the Cys-159. Ser-165 contacts DNA.

Belongs to the MGMT family.

Its subcellular location is the nucleus. It catalyses the reaction a 6-O-methyl-2'-deoxyguanosine in DNA + L-cysteinyl-[protein] = S-methyl-L-cysteinyl-[protein] + a 2'-deoxyguanosine in DNA. The enzyme catalyses a 4-O-methyl-thymidine in DNA + L-cysteinyl-[protein] = a thymidine in DNA + S-methyl-L-cysteinyl-[protein]. Its function is as follows. Involved in the cellular defense against the biological effects of O6-methylguanine (O6-MeG) and O4-methylthymine (O4-MeT) in DNA. Repairs the methylated nucleobase in DNA by stoichiometrically transferring the methyl group to a cysteine residue in the enzyme. This is a suicide reaction: the enzyme is irreversibly inactivated. This Kluyveromyces lactis (strain ATCC 8585 / CBS 2359 / DSM 70799 / NBRC 1267 / NRRL Y-1140 / WM37) (Yeast) protein is Methylated-DNA--protein-cysteine methyltransferase (MGT1).